A 561-amino-acid polypeptide reads, in one-letter code: Excitatory amino acid transporter 4 (561 aa).

At 1–52 (MSSHGNSLFLRESGAGGGCLQGLQDSLQQRALRTRLRLQTMTREHVRRFLRR) the chain is on the cytoplasmic side. Phosphoserine is present on Ser-2. 3 helical membrane-spanning segments follow: residues 53-73 (NAFI…AFAL), 96-116 (MLQM…MASL), and 130-150 (VYYM…VTII). Residues Asn-213, Asn-229, and Asn-236 are each glycosylated (N-linked (GlcNAc...) asparagine). The next 3 membrane-spanning stretches (helical) occupy residues 259 to 282 (SANG…IGGM), 292 to 319 (FFDS…LFLI), and 341 to 362 (LTVI…YFLV). The discontinuously helical intramembrane region spans 368 to 398 (FPFIGGILQALITAMGTSSSSATLPITFRCL). 385–387 (SSS) contributes to the L-aspartate binding site. Residues 408-434 (ITRFVLPVGATVNMDGTALYEALAAIF) form a helical membrane-spanning segment. Gly-416, Thr-418, and Asn-420 together coordinate Na(+). Residues Thr-424, 465–469 (IPQAG), Asp-498, and Asn-505 each bind L-aspartate. An intramembrane region (discontinuously helical) is located at residues 448–481 (ITTISITATAASVGAAGIPQAGLVTMVIVLTSVG). Residues 495–516 (WFLDRLRTMTNVLGDSIGAAVI) form a helical membrane-spanning segment. Residues Asn-505 and Asp-509 each contribute to the Na(+) site.

Belongs to the dicarboxylate/amino acid:cation symporter (DAACS) (TC 2.A.23) family. SLC1A6 subfamily. As to quaternary structure, homotrimer.

Its subcellular location is the cell membrane. It carries out the reaction K(+)(in) + L-glutamate(out) + 3 Na(+)(out) + H(+)(out) = K(+)(out) + L-glutamate(in) + 3 Na(+)(in) + H(+)(in). The catalysed reaction is K(+)(in) + L-aspartate(out) + 3 Na(+)(out) + H(+)(out) = K(+)(out) + L-aspartate(in) + 3 Na(+)(in) + H(+)(in). The enzyme catalyses D-aspartate(out) + K(+)(in) + 3 Na(+)(out) + H(+)(out) = D-aspartate(in) + K(+)(out) + 3 Na(+)(in) + H(+)(in). Its function is as follows. Sodium-dependent, high-affinity amino acid transporter that mediates the uptake of L-glutamate and also L-aspartate and D-aspartate. Functions as a symporter that transports one amino acid molecule together with two or three Na(+) ions and one proton, in parallel with the counter-transport of one K(+) ion. Mediates Cl(-) flux that is not coupled to amino acid transport; this avoids the accumulation of negative charges due to aspartate and Na(+) symport. Plays a redundant role in the rapid removal of released glutamate from the synaptic cleft, which is essential for terminating the postsynaptic action of glutamate. The sequence is that of Excitatory amino acid transporter 4 (Slc1a6) from Rattus norvegicus (Rat).